The sequence spans 668 residues: MSQAISLTFPDGSVRSFPAGATGKDVAESISKSLAKSAVAIAIDGAVRDLSDAVTDGKIEIITRKDGRALELIRHDAAHVMAEAVQELWPGTQVTIGPVIENGFYYDFAKNEPFTPDDLPKIEKKMKEIIARNAPFTKQIWSREKAKEVFAAKGEQYKVELVDAIPEGQDLKIYHQGDWFDLCRGPHMASTGQVGTAFKLMKVAGAYWRGDSNNAMLSRIYGTAWADQADLDNYLHMLAEAEKRDHRKLGREMDLFHFQEEGPGVVFWHGKGWRIFQTLVAYMRRRLAADYQEVNAPQVLDTSLWETSGHWGWYQENMFAVKSAHAMTHPEDKEADNRVFALKPMNCPGHVQIFKHGLKSYRELPIRLAEFGLVHRYEPSGALHGLMRVRGFTQDDAHIFCTDEQMAAECLKINDLILSVYEDFGFKEIVVKLSTRPEKRVGSDALWDRAEAVMTDVLKTIEAQSEGRIKTGILPGEGAFYGPKFEYTLKDAIGREWQCGTTQVDFNLPERFGAFYIDSNSEKTQPVMIHRAICGSMERFLGILIENFAGHMPLWVSPLQVVVATITSEADAYGLEVAEALRDAGLNVETDFRNEKINYKIREHSVTKVPVIIVCGRKEAEERTVNIRRLGSQDQVSMGLDAAVESLTLEATPPDIRRKAEAKKAKAA.

One can recognise a TGS domain in the interval 1-64 (MSQAISLTFP…TDGKIEIITR (64 aa)). Residues 245-553 (DHRKLGREMD…LIENFAGHMP (309 aa)) form a catalytic region. The Zn(2+) site is built by Cys-347, His-398, and His-530.

The protein belongs to the class-II aminoacyl-tRNA synthetase family. As to quaternary structure, homodimer. Requires Zn(2+) as cofactor.

The protein localises to the cytoplasm. The catalysed reaction is tRNA(Thr) + L-threonine + ATP = L-threonyl-tRNA(Thr) + AMP + diphosphate + H(+). In terms of biological role, catalyzes the attachment of threonine to tRNA(Thr) in a two-step reaction: L-threonine is first activated by ATP to form Thr-AMP and then transferred to the acceptor end of tRNA(Thr). Also edits incorrectly charged L-seryl-tRNA(Thr). The sequence is that of Threonine--tRNA ligase from Rhizobium etli (strain CIAT 652).